We begin with the raw amino-acid sequence, 214 residues long: Adenylate kinase (214 aa).

10–15 lines the ATP pocket; the sequence is GAGKGT. The segment at 30–59 is NMP; the sequence is STGDMFRAAVKNETPLGLEAKSYMDKGHLV. AMP-binding positions include Thr31, Arg36, 57–59, 85–88, and Gln92; these read HLV and GFPR. The segment at 126-163 is LID; it reads GRWICPVCGASYHTMFNPPKEAGVCDKDGGKLYQREDD. An ATP-binding site is contributed by Arg127. 2 residues coordinate Zn(2+): Cys130 and Cys133. ATP is bound at residue 136-137; sequence SY. Positions 150 and 153 each coordinate Zn(2+). AMP contacts are provided by Arg160 and Arg171. Gln199 provides a ligand contact to ATP.

It belongs to the adenylate kinase family. Monomer.

The protein localises to the cytoplasm. The enzyme catalyses AMP + ATP = 2 ADP. It participates in purine metabolism; AMP biosynthesis via salvage pathway; AMP from ADP: step 1/1. In terms of biological role, catalyzes the reversible transfer of the terminal phosphate group between ATP and AMP. Plays an important role in cellular energy homeostasis and in adenine nucleotide metabolism. The polypeptide is Adenylate kinase (Brevibacillus brevis (strain 47 / JCM 6285 / NBRC 100599)).